Reading from the N-terminus, the 113-residue chain is Nucleoid-associated protein Syncc9605_0027 (113 aa).

This sequence belongs to the YbaB/EbfC family. Homodimer.

The protein resides in the cytoplasm. The protein localises to the nucleoid. Its function is as follows. Binds to DNA and alters its conformation. May be involved in regulation of gene expression, nucleoid organization and DNA protection. The chain is Nucleoid-associated protein Syncc9605_0027 from Synechococcus sp. (strain CC9605).